The following is a 139-amino-acid chain: ATP synthase epsilon chain (139 aa).

Belongs to the ATPase epsilon chain family. As to quaternary structure, F-type ATPases have 2 components, CF(1) - the catalytic core - and CF(0) - the membrane proton channel. CF(1) has five subunits: alpha(3), beta(3), gamma(1), delta(1), epsilon(1). CF(0) has three main subunits: a, b and c.

Its subcellular location is the cell membrane. Its function is as follows. Produces ATP from ADP in the presence of a proton gradient across the membrane. This is ATP synthase epsilon chain from Roseiflexus sp. (strain RS-1).